We begin with the raw amino-acid sequence, 196 residues long: Rac-like GTP-binding protein ARAC5 (196 aa).

16–21 contributes to the GTP binding site; that stretch reads AVGKTC. An Effector region motif is present at residues 35-43; that stretch reads YVPTVFDNF. GTP is bound by residues 119–121 and 159–161; these read KLD and SSK. Cysteine methyl ester is present on cysteine 193. The S-geranylgeranyl cysteine moiety is linked to residue cysteine 193. Positions 194–196 are cleaved as a propeptide — removed in mature form; it reads VFL.

The protein belongs to the small GTPase superfamily. Rho family. In terms of assembly, interacts with GDI1 and ROPGEF8 homodimer. Binds to SPK1. Ubiquitous. Preferentially expressed at the tip of root hairs.

The protein localises to the cytoplasm. The protein resides in the membrane. It is found in the cell membrane. Its function is as follows. Involved in cell polarity control during the actin-dependent tip growth of root hairs, thus regulating root hair length and root hair initiation. Inactive GDP-bound Rho GTPases reside in the cytosol, are found in a complex with Rho GDP-dissociation inhibitors (Rho GDIs), and are released from the GDI protein in order to translocate to membranes upon activation. This is Rac-like GTP-binding protein ARAC5 from Arabidopsis thaliana (Mouse-ear cress).